The following is a 64-amino-acid chain: MGIKPSYIKSMGIALLEQHGKSFNGNFDDNKKVVAEITTIESKMIRNRVAGYVTRKVNTTPARR.

Belongs to the eukaryotic ribosomal protein eS17 family.

This Methanocorpusculum labreanum (strain ATCC 43576 / DSM 4855 / Z) protein is Small ribosomal subunit protein eS17.